The primary structure comprises 431 residues: Serine/threonine-protein kinase Sgk1 (431 aa).

The necessary for localization to the mitochondria stretch occupies residues 1-60 (MTVKAEAARSTLTYSRMRGMVAILIAFMKQRRMGLNDFIQKIASNTYACKHAEVQSILKM). The tract at residues 65–92 (EPELMNANPSPPPSPSQQINLGPSSNPH) is disordered. S74 carries the post-translational modification Phosphoserine. S78 carries the phosphoserine; by MAPK7 modification. Residues 81 to 91 (QQINLGPSSNP) are compositionally biased toward polar residues. Residues 98–355 (FHFLKVIGKG…FMEIKSHIFF (258 aa)) enclose the Protein kinase domain. ATP-binding positions include 104 to 112 (IGKGSFGKV) and K127. The Nuclear localization signal signature appears at 131–141 (KKAILKKKEEK). The active-site Proton acceptor is D222. T256 bears the Phosphothreonine; by PDPK1 mark. Positions 356 to 431 (SLINWDDLIN…SYAPPVDSFL (76 aa)) constitute an AGC-kinase C-terminal domain. T369 bears the Phosphothreonine; by PKA mark. S397, S401, and S422 each carry phosphoserine.

It belongs to the protein kinase superfamily. AGC Ser/Thr protein kinase family. Homodimer; disulfide-linked. Interacts with MAPK3/ERK1, MAPK1/ERK2, MAP2K1/MEK1, MAP2K2/MEK2, NEDD4, NEDD4L, MAPT/TAU, MAPK7, CREB1, SLC9A3R2/NHERF2 and KCNJ1/ROMK1. Forms a trimeric complex with FBXW7 and NOTCH1 Associates with the mammalian target of rapamycin complex 2 (mTORC2) via an interaction with MAPKAP1/SIN1. Regulated by phosphorylation. Activated by phosphorylation on Ser-422 by mTORC2, transforming it into a substrate for PDPK1 which phosphorylates it on Thr-256. Phosphorylation on Ser-397 and Ser-401 are also essential for its activity. Phosphorylation on Ser-78 by MAPK7 is required for growth factor-induced cell cycle progression. Post-translationally, ubiquitinated by NEDD4L; which promotes proteasomal degradation. Ubiquitinated by SYVN1 at the endoplasmic reticulum; which promotes rapid proteasomal degradation and maintains a high turnover rate in resting cells.

The protein resides in the cytoplasm. It is found in the nucleus. Its subcellular location is the endoplasmic reticulum membrane. It localises to the cell membrane. The protein localises to the mitochondrion. The catalysed reaction is L-seryl-[protein] + ATP = O-phospho-L-seryl-[protein] + ADP + H(+). It carries out the reaction L-threonyl-[protein] + ATP = O-phospho-L-threonyl-[protein] + ADP + H(+). With respect to regulation, two specific sites, one in the kinase domain (Thr-256) and the other in the C-terminal regulatory region (Ser-422), need to be phosphorylated for its full activation. Phosphorylation at Ser-397 and Ser-401 are also essential for its activity. Activated by WNK1, WNK2, WNK3 and WNK4; which promote phosphorylation by mTORC2. Its function is as follows. Serine/threonine-protein kinase which is involved in the regulation of a wide variety of ion channels, membrane transporters, cellular enzymes, transcription factors, neuronal excitability, cell growth, proliferation, survival, migration and apoptosis. Plays an important role in cellular stress response. Contributes to regulation of renal Na(+) retention, renal K(+) elimination, salt appetite, gastric acid secretion, intestinal Na(+)/H(+) exchange and nutrient transport, insulin-dependent salt sensitivity of blood pressure, salt sensitivity of peripheral glucose uptake, cardiac repolarization and memory consolidation. Up-regulates Na(+) channels: SCNN1A/ENAC, SCN5A and ASIC1/ACCN2, K(+) channels: KCNJ1/ROMK1, KCNA1-5, KCNQ1-5 and KCNE1, epithelial Ca(2+) channels: TRPV5 and TRPV6, chloride channels: BSND, CLCN2 and CFTR, glutamate transporters: SLC1A3/EAAT1, SLC1A2 /EAAT2, SLC1A1/EAAT3, SLC1A6/EAAT4 and SLC1A7/EAAT5, amino acid transporters: SLC1A5/ASCT2, SLC38A1/SN1 and SLC6A19, creatine transporter: SLC6A8, Na(+)/dicarboxylate cotransporter: SLC13A2/NADC1, Na(+)-dependent phosphate cotransporter: SLC34A2/NAPI-2B, glutamate receptor: GRIK2/GLUR6. Up-regulates carriers: SLC9A3/NHE3, SLC12A1/NKCC2, SLC12A3/NCC, SLC5A3/SMIT, SLC2A1/GLUT1, SLC5A1/SGLT1 and SLC15A2/PEPT2. Regulates enzymes: GSK3A/B, PMM2 and Na(+)/K(+) ATPase, and transcription factors: CTNNB1 and nuclear factor NF-kappa-B. Stimulates sodium transport into epithelial cells by enhancing the stability and expression of SCNN1A/ENAC. This is achieved by phosphorylating the NEDD4L ubiquitin E3 ligase, promoting its interaction with 14-3-3 proteins, thereby preventing it from binding to SCNN1A/ENAC and targeting it for degradation. Regulates store-operated Ca(+2) entry (SOCE) by stimulating ORAI1 and STIM1. Regulates KCNJ1/ROMK1 directly via its phosphorylation or indirectly via increased interaction with SLC9A3R2/NHERF2. Phosphorylates MDM2 and activates MDM2-dependent ubiquitination of p53/TP53. Phosphorylates MAPT/TAU and mediates microtubule depolymerization and neurite formation in hippocampal neurons. Phosphorylates SLC2A4/GLUT4 and up-regulates its activity. Phosphorylates APBB1/FE65 and promotes its localization to the nucleus. Phosphorylates MAPK1/ERK2 and activates it by enhancing its interaction with MAP2K1/MEK1 and MAP2K2/MEK2. Phosphorylates FBXW7 and plays an inhibitory role in the NOTCH1 signaling. Phosphorylates FOXO1 resulting in its relocalization from the nucleus to the cytoplasm. Phosphorylates FOXO3, promoting its exit from the nucleus and interference with FOXO3-dependent transcription. Phosphorylates BRAF and MAP3K3/MEKK3 and inhibits their activity. Phosphorylates SLC9A3/NHE3 in response to dexamethasone, resulting in its activation and increased localization at the cell membrane. Phosphorylates CREB1. Necessary for vascular remodeling during angiogenesis. The protein is Serine/threonine-protein kinase Sgk1 (Sgk1) of Mus musculus (Mouse).